The chain runs to 267 residues: uncharacterized protein (267 aa).

A disordered region spans residues 58-90 (RHTDDKQEKNQNEGEDNQKGENKTTDQQDGPKK). 2 helical membrane passes run 101-121 (IYVL…LSQM) and 226-246 (GMTT…AWLG).

The protein localises to the membrane. This is an uncharacterized protein from Caenorhabditis elegans.